Here is a 326-residue protein sequence, read N- to C-terminus: Glyoxylate/hydroxypyruvate reductase B (326 aa).

Catalysis depends on residues R237 and E266. H285 (proton donor) is an active-site residue.

This sequence belongs to the D-isomer specific 2-hydroxyacid dehydrogenase family. GhrB subfamily. In terms of assembly, homodimer.

It localises to the cytoplasm. The enzyme catalyses glycolate + NADP(+) = glyoxylate + NADPH + H(+). It catalyses the reaction (R)-glycerate + NAD(+) = 3-hydroxypyruvate + NADH + H(+). It carries out the reaction (R)-glycerate + NADP(+) = 3-hydroxypyruvate + NADPH + H(+). Its function is as follows. Catalyzes the NADPH-dependent reduction of glyoxylate and hydroxypyruvate into glycolate and glycerate, respectively. The sequence is that of Glyoxylate/hydroxypyruvate reductase B from Yersinia pseudotuberculosis serotype O:1b (strain IP 31758).